A 409-amino-acid chain; its full sequence is Arginine deiminase (409 aa).

Cysteine 397 serves as the catalytic Amidino-cysteine intermediate.

This sequence belongs to the arginine deiminase family.

It is found in the cytoplasm. It carries out the reaction L-arginine + H2O = L-citrulline + NH4(+). Its pathway is amino-acid degradation; L-arginine degradation via ADI pathway; carbamoyl phosphate from L-arginine: step 1/2. This Metamycoplasma hominis (Mycoplasma hominis) protein is Arginine deiminase (arcA).